The following is a 102-amino-acid chain: Urease subunit beta (102 aa).

It belongs to the urease beta subunit family. In terms of assembly, heterotrimer of UreA (gamma), UreB (beta) and UreC (alpha) subunits. Three heterotrimers associate to form the active enzyme.

It localises to the cytoplasm. It carries out the reaction urea + 2 H2O + H(+) = hydrogencarbonate + 2 NH4(+). It functions in the pathway nitrogen metabolism; urea degradation; CO(2) and NH(3) from urea (urease route): step 1/1. This Clostridium perfringens protein is Urease subunit beta.